The sequence spans 353 residues: Uroporphyrinogen decarboxylase (353 aa).

Residues 30–34 (RQAGR), aspartate 79, tyrosine 154, serine 209, and histidine 332 contribute to the substrate site.

The protein belongs to the uroporphyrinogen decarboxylase family. In terms of assembly, homodimer.

It is found in the cytoplasm. The catalysed reaction is uroporphyrinogen III + 4 H(+) = coproporphyrinogen III + 4 CO2. It functions in the pathway porphyrin-containing compound metabolism; protoporphyrin-IX biosynthesis; coproporphyrinogen-III from 5-aminolevulinate: step 4/4. Functionally, catalyzes the decarboxylation of four acetate groups of uroporphyrinogen-III to yield coproporphyrinogen-III. The polypeptide is Uroporphyrinogen decarboxylase (Mycolicibacterium smegmatis (strain ATCC 700084 / mc(2)155) (Mycobacterium smegmatis)).